Consider the following 1889-residue polypeptide: E3 ubiquitin-protein ligase UBR3 (1889 aa).

The segment at 1 to 27 (MAAAAAAAAVGDPQPPQPEAPAQGLAL) is disordered. Residues 118 to 189 (ALCGLVWTAN…ESGFCRRHQI (72 aa)) form a UBR-type zinc finger. A disordered region spans residues 338–362 (LGQIDSSDEEDQDGSQGLGKRKRVK). Phosphoserine occurs at positions 343 and 344. 2 helical membrane-spanning segments follow: residues 761–781 (MLEG…HLGM) and 919–939 (LLHC…ILMD). The stretch at 1167–1199 (KKITAAEKKTLDKEERRQKARERQQKLLAEFAS) forms a coiled coil. Ser1199 carries the phosphoserine modification. Residues 1306-1364 (DSSCLLAVSIGWEGGVYVQTCGHTLHIDCHKSYMESLRNDQVLQGFSVDKGEFTCPLCR) form an RING-type; degenerate zinc finger. The chain crosses the membrane as a helical span at residues 1807-1827 (QNCGAGTGIFLLINASVIIII).

It belongs to the E3 ubiquitin-protein ligase UBR1-like family. Interacts with UBE2A and UBE2B. Expressed in numerous cells of the smell, touch, vision, hearing and taste senses. Expressed in cells of the olfactory pathway, including the olfactory cell layer of the main olfactory epithelium (MOE), a mitral neuron cell layer of the olfactory bulb (OB), and a pyramidal cell layer of the piriform cortex of the olfactory cortex (OC). Expressed in the vomeronasal sensory epithelium of the vomeronasal organ (VNO) and the mitral cells of the accessory olfactory bulb. Expressed in tactile tissues, including the dorsal root ganglion, trigeminal ganglion and follicle-sinus complexes. Expressed in cells between hair follicle and sinus and also in the region of the rete ridge collar. Expressed in taste buds of the fungiform, circumvallate, and foliate papillae. Expressed in the spiral ganglion, the organ of Corti of the cochlea in the inner ear, in the sensory epithelium of macula and vestibular ganglion of the balancing system (at protein level). Expressed in the liver and skeletal muscle.

Its subcellular location is the membrane. The catalysed reaction is S-ubiquitinyl-[E2 ubiquitin-conjugating enzyme]-L-cysteine + [acceptor protein]-L-lysine = [E2 ubiquitin-conjugating enzyme]-L-cysteine + N(6)-ubiquitinyl-[acceptor protein]-L-lysine.. It participates in protein modification; protein ubiquitination. Its function is as follows. E3 ubiquitin-protein ligase which is a component of the N-end rule pathway. Does not bind to proteins bearing specific N-terminal residues that are destabilizing according to the N-end rule, leading to their ubiquitination and subsequent degradation. May play a role in Shh signaling by mediating the ubiquitination of Kif7. May be important for MYH9 function in certain tissues, possibly by regulating the ubiquitination of MYH9 and consequently affecting its interaction with MYO7A. This chain is E3 ubiquitin-protein ligase UBR3 (Ubr3), found in Mus musculus (Mouse).